We begin with the raw amino-acid sequence, 746 residues long: Probable ubiquitin carboxyl-terminal hydrolase MINDY-4 (746 aa).

3 disordered regions span residues 123 to 179 (DDET…SEGE), 198 to 254 (MALG…IKGE), and 319 to 342 (GKGA…FSNM). 2 stretches are compositionally biased toward polar residues: residues 141–152 (YRSQNDLQFNKS) and 165–174 (TEAGVTSTGV). Catalysis depends on cysteine 448, which acts as the Nucleophile. Histidine 666 acts as the Proton acceptor in catalysis.

It belongs to the MINDY deubiquitinase family. FAM188 subfamily.

The catalysed reaction is Thiol-dependent hydrolysis of ester, thioester, amide, peptide and isopeptide bonds formed by the C-terminal Gly of ubiquitin (a 76-residue protein attached to proteins as an intracellular targeting signal).. In terms of biological role, probable hydrolase that can remove 'Lys-48'-linked conjugated ubiquitin from proteins. The polypeptide is Probable ubiquitin carboxyl-terminal hydrolase MINDY-4 (mindy4) (Xenopus tropicalis (Western clawed frog)).